Consider the following 473-residue polypeptide: Ribulose bisphosphate carboxylase large chain (473 aa).

Positions 116 and 166 each coordinate substrate. Lys168 acts as the Proton acceptor in catalysis. Lys170 is a substrate binding site. Residues Lys194, Asp196, and Glu197 each contribute to the Mg(2+) site. Lys194 carries the N6-carboxylysine modification. His287 acts as the Proton acceptor in catalysis. 3 residues coordinate substrate: Arg288, His320, and Ser372.

Belongs to the RuBisCO large chain family. Type I subfamily. As to quaternary structure, heterohexadecamer of 8 large chains and 8 small chains. Mg(2+) serves as cofactor.

The catalysed reaction is 2 (2R)-3-phosphoglycerate + 2 H(+) = D-ribulose 1,5-bisphosphate + CO2 + H2O. The enzyme catalyses D-ribulose 1,5-bisphosphate + O2 = 2-phosphoglycolate + (2R)-3-phosphoglycerate + 2 H(+). Functionally, ruBisCO catalyzes two reactions: the carboxylation of D-ribulose 1,5-bisphosphate, the primary event in carbon dioxide fixation, as well as the oxidative fragmentation of the pentose substrate. Both reactions occur simultaneously and in competition at the same active site. This is Ribulose bisphosphate carboxylase large chain from Alkalilimnicola ehrlichii (strain ATCC BAA-1101 / DSM 17681 / MLHE-1).